We begin with the raw amino-acid sequence, 166 residues long: MFKKLFGKGKEVQKDIAIYAPLTGEYVKIEDIPDPVFAQKMMGEGFGINPTEGEVVSPIAGRVDNVFPTKHAIGLKADNGLELLVHIGLDTVQLDGEGFEVLVSSGDEVNVGDPLVRFNLEYINNNAKSVISPIIITNTDQAASINIYDENAVIKGETKVIDVTMN.

The region spanning D34–N138 is the PTS EIIA type-1 domain. Zn(2+) contacts are provided by H71 and H86. H86 acts as the Tele-phosphohistidine intermediate; for EIIA activity in catalysis. Phosphohistidine; by HPr is present on H86.

Heterodimer with glycerol kinase (glpk). Zn(2+) is required as a cofactor.

It is found in the cytoplasm. Functionally, the phosphoenolpyruvate-dependent sugar phosphotransferase system (sugar PTS), a major carbohydrate active transport system, catalyzes the phosphorylation of incoming sugar substrates concomitantly with their translocation across the cell membrane. The enzyme II complex composed of PtsG and Crr is involved in glucose transport. The sequence is that of PTS system glucose-specific EIIA component (crr) from Staphylococcus aureus (strain MRSA252).